The chain runs to 131 residues: Insertion element iso-IS1n protein InsB (131 aa).

It belongs to the transposase 27 family.

Functionally, absolutely required for transposition of IS1. The chain is Insertion element iso-IS1n protein InsB (insB) from Shigella dysenteriae.